The sequence spans 127 residues: Small ribosomal subunit protein uS17m (127 aa).

This sequence belongs to the universal ribosomal protein uS17 family.

The protein resides in the mitochondrion. The polypeptide is Small ribosomal subunit protein uS17m (mrps17) (Dictyostelium discoideum (Social amoeba)).